The following is a 404-amino-acid chain: S-adenosylmethionine synthase (404 aa).

139-144 contributes to the ATP binding site; sequence GKGSTD.

This sequence belongs to the AdoMet synthase 2 family. Requires Mg(2+) as cofactor.

It catalyses the reaction L-methionine + ATP + H2O = S-adenosyl-L-methionine + phosphate + diphosphate. It functions in the pathway amino-acid biosynthesis; S-adenosyl-L-methionine biosynthesis; S-adenosyl-L-methionine from L-methionine: step 1/1. Its function is as follows. Catalyzes the formation of S-adenosylmethionine from methionine and ATP. This is S-adenosylmethionine synthase from Saccharolobus islandicus (strain Y.N.15.51 / Yellowstone #2) (Sulfolobus islandicus).